Consider the following 229-residue polypeptide: Protein-L-isoaspartate O-methyltransferase (229 aa).

Residue S65 is part of the active site.

Belongs to the methyltransferase superfamily. L-isoaspartyl/D-aspartyl protein methyltransferase family.

The protein resides in the cytoplasm. It carries out the reaction [protein]-L-isoaspartate + S-adenosyl-L-methionine = [protein]-L-isoaspartate alpha-methyl ester + S-adenosyl-L-homocysteine. Its function is as follows. Catalyzes the methyl esterification of L-isoaspartyl residues in peptides and proteins that result from spontaneous decomposition of normal L-aspartyl and L-asparaginyl residues. It plays a role in the repair and/or degradation of damaged proteins. The polypeptide is Protein-L-isoaspartate O-methyltransferase (Chlorobium phaeovibrioides (strain DSM 265 / 1930) (Prosthecochloris vibrioformis (strain DSM 265))).